The primary structure comprises 421 residues: Phosphoglycerate kinase, cytosolic (421 aa).

(2R)-3-phosphoglycerate-binding residues include V23, D24, F25, N26, R39, S61, H62, G64, R65, R135, H172, and R173. ADP-binding residues include G218 and A219. G218 provides a ligand contact to CDP. Residues A219 and K220 each contribute to the AMP site. A219 lines the ATP pocket. A219 contributes to the Mg(2+) binding site. K220 contributes to the (2R)-3-phosphoglycerate binding site. CDP is bound at residue D223. Residue D223 participates in Mg(2+) binding. The ADP site is built by K224 and G242. K224 serves as a coordination point for AMP. K224 contributes to the ATP binding site. Residue G242 participates in CDP binding. A243 and A315 together coordinate AMP. ATP is bound by residues A243 and A315. Residues A315 and N339 each coordinate ADP. CDP-binding residues include G340 and F345. ADP contacts are provided by F345, E346, D378, and S379. E346 serves as a coordination point for AMP. E346, D378, and S379 together coordinate ATP. D378 is a Mg(2+) binding site.

It belongs to the phosphoglycerate kinase family. In terms of assembly, monomer. Mg(2+) serves as cofactor.

The protein resides in the cytoplasm. It carries out the reaction (2R)-3-phosphoglycerate + ATP = (2R)-3-phospho-glyceroyl phosphate + ADP. Its pathway is carbohydrate degradation; glycolysis; pyruvate from D-glyceraldehyde 3-phosphate: step 2/5. In Trypanosoma brucei brucei, this protein is Phosphoglycerate kinase, cytosolic.